Reading from the N-terminus, the 420-residue chain is Ribosome biogenesis protein WDR12 homolog (420 aa).

Positions 10–92 are ubiquitin-like (UBL) domain; sequence VQVHLKTKQE…EDAIEIEYVE (83 aa). 7 WD repeats span residues 104 to 142, 143 to 185, 192 to 231, 250 to 288, 290 to 329, 335 to 375, and 379 to 417; these read LHDD…LTIS, GHTA…NSVE, GHER…AAEG, GHRE…IKTE, STNK…GSVV, GHNA…APLY, and GHGE…AEDT.

This sequence belongs to the WD repeat WDR12/YTM1 family.

Its subcellular location is the nucleus. It is found in the nucleolus. The protein resides in the nucleoplasm. In terms of biological role, required for maturation of ribosomal RNAs and formation of the large ribosomal subunit. This chain is Ribosome biogenesis protein WDR12 homolog, found in Drosophila erecta (Fruit fly).